A 509-amino-acid polypeptide reads, in one-letter code: Maturase K (509 aa).

The protein belongs to the intron maturase 2 family. MatK subfamily.

It localises to the plastid. It is found in the chloroplast. Functionally, usually encoded in the trnK tRNA gene intron. Probably assists in splicing its own and other chloroplast group II introns. This Thujopsis dolabrata (Hiba arborvitae) protein is Maturase K.